A 262-amino-acid polypeptide reads, in one-letter code: Hydroxyethylthiazole kinase (262 aa).

M50 is a substrate binding site. Positions 125 and 171 each coordinate ATP. G198 contributes to the substrate binding site.

It belongs to the Thz kinase family. Mg(2+) serves as cofactor.

The catalysed reaction is 5-(2-hydroxyethyl)-4-methylthiazole + ATP = 4-methyl-5-(2-phosphooxyethyl)-thiazole + ADP + H(+). It functions in the pathway cofactor biosynthesis; thiamine diphosphate biosynthesis; 4-methyl-5-(2-phosphoethyl)-thiazole from 5-(2-hydroxyethyl)-4-methylthiazole: step 1/1. Functionally, catalyzes the phosphorylation of the hydroxyl group of 4-methyl-5-beta-hydroxyethylthiazole (THZ). The chain is Hydroxyethylthiazole kinase from Escherichia coli O7:K1 (strain IAI39 / ExPEC).